Here is a 138-residue protein sequence, read N- to C-terminus: Cellular retinoic acid-binding protein 2 (138 aa).

The Nuclear localization signal motif lies at 21-31 (KVLGVNVMLRK). Residue K102 forms a Glycyl lysine isopeptide (Lys-Gly) (interchain with G-Cter in SUMO) linkage. Position 133 to 135 (133 to 135 (RVY)) interacts with all-trans-retinoate.

It belongs to the calycin superfamily. Fatty-acid binding protein (FABP) family. As to quaternary structure, interacts with RXR and RARA. Interacts with importin alpha. Sumoylated in response to retinoic acid binding, sumoylation is critical for dissociation from ER and subsequent nuclear translocation.

The protein localises to the cytoplasm. The protein resides in the endoplasmic reticulum. It is found in the nucleus. Functionally, transports retinoic acid to the nucleus. Regulates the access of retinoic acid to the nuclear retinoic acid receptors. This chain is Cellular retinoic acid-binding protein 2 (CRABP2), found in Homo sapiens (Human).